The following is a 326-amino-acid chain: Aquaporin-3 (326 aa).

The next 2 helical transmembrane spans lie at 24-44 (LAEF…IITA) and 64-84 (LAFG…GISG). The NPA 1 signature appears at 88–90 (NPA). A helical transmembrane segment spans residues 107–127 (LVYIFMQYMGAFFAASILYAV). A glycan (N-linked (GlcNAc...) asparagine) is linked at N146. Transmembrane regions (helical) follow at residues 166-186 (IFDA…IIDP) and 196-216 (IPLY…YNAG). The short motif at 220 to 222 (NPA) is the NPA 2 element. The chain crosses the membrane as a helical span at residues 247–267 (LWWLVPVIGPHVGGLLGGVTY). The N-linked (GlcNAc...) asparagine glycan is linked to N294.

It belongs to the MIP/aquaporin (TC 1.A.8) family.

It is found in the cell membrane. Functionally, aquaglyceroporin that may modulate the water content and osmolytes during anhydrobiosis. The protein is Aquaporin-3 of Milnesium tardigradum (Water bear).